The primary structure comprises 319 residues: MAAVDSFQLLYREIARSCSGYVETLALVGACYMASKTVIFMRDCYSLIRLYFVPRLVRHRDLSQQYGQWAIICGASEAIAKAYAEELARHGICVILISKDLSSVSDTARLISNNYGVEAICIEADFNQGPSACKPIKDAISSKDIGFLVNSFDGTLEISQNFLELSESVLWGTINRNIAATTLVTRLALPAMMEKGRGAVVNISSGHCFHPIPRKAAFSASTAFLDNFSRSLHYEYGDQGVFVQSLLPFRVASQRPEGSAPPASWLVPSPQVYASHALSTLGISHRTTGYWPHSMQLGLVKMMPEWVWMLGSRVFTMAT.

The interval 2–82 is required for mitochondria translocation; the sequence is AAVDSFQLLY…CGASEAIAKA (81 aa). NADP(+) contacts are provided by residues 74-80, Lys-99, and Asp-125; that span reads GASEAIA.

It belongs to the short-chain dehydrogenases/reductases (SDR) family. 17-beta-HSD 3 subfamily.

The protein resides in the mitochondrion. The sequence is that of Inactive hydroxysteroid dehydrogenase-like protein 1 (hsdl1) from Danio rerio (Zebrafish).